The following is a 382-amino-acid chain: Anthranilate O-methyltransferase 1 (382 aa).

Y20 serves as a coordination point for S-adenosyl-L-homocysteine. Residue Q27 coordinates anthranilate. S-adenosyl-L-homocysteine-binding residues include C61, N66, D102, L103, S146, and Y147. An anthranilate-binding site is contributed by W168. Residues E268 and F270 each coordinate Mg(2+).

It belongs to the methyltransferase superfamily. Type-7 methyltransferase family. SABATH subfamily.

It carries out the reaction anthranilate + S-adenosyl-L-methionine = O-methyl anthranilate + S-adenosyl-L-homocysteine. Functionally, methyltransferase involved in the biosynthesis of methyl anthranilate in response to stresses. Utilizes anthranilic acid as substrate, but not salicylic acid. Produces exclusively the O-methyl ester. The chain is Anthranilate O-methyltransferase 1 (AAMT1) from Zea mays (Maize).